A 104-amino-acid chain; its full sequence is Small ribosomal subunit protein uS10 (104 aa).

It belongs to the universal ribosomal protein uS10 family. Part of the 30S ribosomal subunit.

Involved in the binding of tRNA to the ribosomes. This chain is Small ribosomal subunit protein uS10, found in Variovorax paradoxus (strain S110).